We begin with the raw amino-acid sequence, 349 residues long: NADH-quinone oxidoreductase subunit H (349 aa).

Transmembrane regions (helical) follow at residues 19-39, 88-108, 123-143, 161-181, 202-222, 249-269, 284-304, and 325-345; these read VWTLTKIVAIIAPLMLCVAYL, GLFILGPILAIAPSLAAWAVV, LLFLLAITSVEVYGVIIAGWA, VSYEVAMGFALICVLLISASL, FLSWNWIPLFPMFIVFLISGI, GMAFALFFLAEYANMILVSIL, FLPDGFFWLALKTAFFLFVFL, and VFIPITLVWVIVVAVWMMSPL.

This sequence belongs to the complex I subunit 1 family. In terms of assembly, NDH-1 is composed of 14 different subunits. Subunits NuoA, H, J, K, L, M, N constitute the membrane sector of the complex.

The protein localises to the cell inner membrane. It carries out the reaction a quinone + NADH + 5 H(+)(in) = a quinol + NAD(+) + 4 H(+)(out). Its function is as follows. NDH-1 shuttles electrons from NADH, via FMN and iron-sulfur (Fe-S) centers, to quinones in the respiratory chain. The immediate electron acceptor for the enzyme in this species is believed to be ubiquinone. Couples the redox reaction to proton translocation (for every two electrons transferred, four hydrogen ions are translocated across the cytoplasmic membrane), and thus conserves the redox energy in a proton gradient. This subunit may bind ubiquinone. This chain is NADH-quinone oxidoreductase subunit H, found in Aromatoleum aromaticum (strain DSM 19018 / LMG 30748 / EbN1) (Azoarcus sp. (strain EbN1)).